A 325-amino-acid polypeptide reads, in one-letter code: Protein FAM50B (325 aa).

A2 is subject to N-acetylalanine. Disordered stretches follow at residues Q92 to R111 and R137 to E160.

This sequence belongs to the FAM50 family. As to expression, widely expressed. Mostly abundant in testis and adult and fetal brain.

The chain is Protein FAM50B (FAM50B) from Homo sapiens (Human).